Reading from the N-terminus, the 698-residue chain is Elongation factor G (698 aa).

A tr-type G domain is found at 10 to 285 (AGTRNIGIMA…AVVDFLPNPL (276 aa)). GTP contacts are provided by residues 19–26 (AHIDAGKT), 83–87 (DTPGH), and 137–140 (NKMD).

It belongs to the TRAFAC class translation factor GTPase superfamily. Classic translation factor GTPase family. EF-G/EF-2 subfamily.

It localises to the cytoplasm. Functionally, catalyzes the GTP-dependent ribosomal translocation step during translation elongation. During this step, the ribosome changes from the pre-translocational (PRE) to the post-translocational (POST) state as the newly formed A-site-bound peptidyl-tRNA and P-site-bound deacylated tRNA move to the P and E sites, respectively. Catalyzes the coordinated movement of the two tRNA molecules, the mRNA and conformational changes in the ribosome. The protein is Elongation factor G of Frankia casuarinae (strain DSM 45818 / CECT 9043 / HFP020203 / CcI3).